Reading from the N-terminus, the 196-residue chain is Nucleoid occlusion factor SlmA (196 aa).

Positions 7–68 (INRREEILQA…GLIEFIEESL (62 aa)) constitute an HTH tetR-type domain. The H-T-H motif DNA-binding region spans 31–50 (TTAKLAKQVGVSEAALYRHF). Residues 110–139 (HALMFENERLRDRINQLFERIETSLRQILR) adopt a coiled-coil conformation.

It belongs to the nucleoid occlusion factor SlmA family. As to quaternary structure, homodimer. Interacts with FtsZ.

It localises to the cytoplasm. Its subcellular location is the nucleoid. Required for nucleoid occlusion (NO) phenomenon, which prevents Z-ring formation and cell division over the nucleoid. Acts as a DNA-associated cell division inhibitor that binds simultaneously chromosomal DNA and FtsZ, and disrupts the assembly of FtsZ polymers. SlmA-DNA-binding sequences (SBS) are dispersed on non-Ter regions of the chromosome, preventing FtsZ polymerization at these regions. The polypeptide is Nucleoid occlusion factor SlmA (Vibrio cholerae serotype O1 (strain ATCC 39315 / El Tor Inaba N16961)).